Here is a 610-residue protein sequence, read N- to C-terminus: Zinc metalloproteinase-disintegrin-like brevilysin H6 (610 aa).

An N-terminal signal peptide occupies residues 1–20; sequence MIQVLLVTICLAAFPYQGSS. Positions 21-191 are excised as a propeptide; sequence IILESGNVND…ASQLNLTPEQ (171 aa). Pyrrolidone carboxylic acid is present on Q192. Positions 198–394 constitute a Peptidase M12B domain; sequence RFVELVLVAD…HNPECIVNEP (197 aa). Residues E201 and D285 each coordinate Ca(2+). 4 disulfide bridges follow: C309/C389, C349/C373, C351/C356, and C373/C378. H334 contributes to the Zn(2+) binding site. E335 is a catalytic residue. The Zn(2+) site is built by H338 and H344. An N-linked (GlcNAc...) asparagine glycan is attached at N372. C389, N392, V404, N407, L409, E411, E414, and D417 together coordinate Ca(2+). Residues 402–488 enclose the Disintegrin domain; the sequence is PPVCGNELLE…ECPADVFHKN (87 aa). Intrachain disulfides connect C405-C424, C405-C434, C416-C429, C416-C434, C418-C424, C428-C451, C442-C448, C447-C473, C460-C480, C467-C492, C467-C499, C492-C504, C499-C504, C511-C526, C511-C561, C526-C572, C539-C549, C549-C556, C556-C598, C561-C572, C592-C603, and C598-C603. A D/ECD-tripeptide motif is present at residues 466–468; it reads ECD. The Ca(2+) site is built by D468, P469, E471, D483, and V484.

The protein belongs to the venom metalloproteinase (M12B) family. P-III subfamily. P-IIIb sub-subfamily. As to quaternary structure, monomer. Zn(2+) serves as cofactor. Post-translationally, in the absence of calcium ions, is autocatalytically degraded giving 29 (p29K) and 45 kDa (p45K) fragments. In presence of calcium ions, the p45K is not detected. In terms of tissue distribution, expressed by the venom gland.

The protein resides in the secreted. With respect to regulation, inhibited by chelating agents. Calcium ions enhance its activity, they also suppress autoproteolysis, and contribute to the stability of the enzyme against pH, heating, urea and cysteine. In terms of biological role, shows weak hemorrhagic activity. Rapidly degrades the alpha-chain of fibrinogen (FGA). This Gloydius brevicauda (Korean slamosa snake) protein is Zinc metalloproteinase-disintegrin-like brevilysin H6.